A 329-amino-acid chain; its full sequence is Acetyl-coenzyme A carboxylase carboxyl transferase subunit alpha (329 aa).

The CoA carboxyltransferase C-terminal domain maps to 40-294 (QLETLAARRR…REAIERHLDD (255 aa)).

It belongs to the AccA family. Acetyl-CoA carboxylase is a heterohexamer composed of biotin carboxyl carrier protein (AccB), biotin carboxylase (AccC) and two subunits each of ACCase subunit alpha (AccA) and ACCase subunit beta (AccD).

It localises to the cytoplasm. It catalyses the reaction N(6)-carboxybiotinyl-L-lysyl-[protein] + acetyl-CoA = N(6)-biotinyl-L-lysyl-[protein] + malonyl-CoA. It participates in lipid metabolism; malonyl-CoA biosynthesis; malonyl-CoA from acetyl-CoA: step 1/1. Its function is as follows. Component of the acetyl coenzyme A carboxylase (ACC) complex. First, biotin carboxylase catalyzes the carboxylation of biotin on its carrier protein (BCCP) and then the CO(2) group is transferred by the carboxyltransferase to acetyl-CoA to form malonyl-CoA. The polypeptide is Acetyl-coenzyme A carboxylase carboxyl transferase subunit alpha (Prochlorococcus marinus (strain MIT 9303)).